A 200-amino-acid chain; its full sequence is Small ribosomal subunit protein uS4c (200 aa).

In terms of domain architecture, S4 RNA-binding spans 91–154 (MRLDNVVFRL…NSRKMVTEAN (64 aa)).

It belongs to the universal ribosomal protein uS4 family. As to quaternary structure, part of the 30S ribosomal subunit. Contacts protein S5. The interaction surface between S4 and S5 is involved in control of translational fidelity.

The protein localises to the plastid. It is found in the chloroplast. Its function is as follows. One of the primary rRNA binding proteins, it binds directly to 16S rRNA where it nucleates assembly of the body of the 30S subunit. Functionally, with S5 and S12 plays an important role in translational accuracy. This Oltmannsiellopsis viridis (Marine flagellate) protein is Small ribosomal subunit protein uS4c (rps4).